A 228-amino-acid chain; its full sequence is Large ribosomal subunit protein uL23m (228 aa).

The interval 194-228 (PEEEGWSEVEENLPLDESAESAAEESSSKGSETRQ) is disordered. The span at 195-216 (EEEGWSEVEENLPLDESAESAA) shows a compositional bias: acidic residues.

This sequence belongs to the universal ribosomal protein uL23 family. As to quaternary structure, component of the mitochondrial large ribosomal subunit (mt-LSU). Mature N.crassa 74S mitochondrial ribosomes consist of a small (37S) and a large (54S) subunit. The 37S small subunit contains a 16S ribosomal RNA (16S mt-rRNA) and 32 different proteins. The 54S large subunit contains a 23S rRNA (23S mt-rRNA) and 42 different proteins. uL23m forms the wall of the exit tunnel.

The protein resides in the mitochondrion. In terms of biological role, component of the mitochondrial ribosome (mitoribosome), a dedicated translation machinery responsible for the synthesis of mitochondrial genome-encoded proteins, including at least some of the essential transmembrane subunits of the mitochondrial respiratory chain. The mitoribosomes are attached to the mitochondrial inner membrane and translation products are cotranslationally integrated into the membrane. This is Large ribosomal subunit protein uL23m (mrp20) from Neurospora crassa (strain ATCC 24698 / 74-OR23-1A / CBS 708.71 / DSM 1257 / FGSC 987).